We begin with the raw amino-acid sequence, 523 residues long: MTGCCDDGPATGPRDLRERLRVVAVRGESLVVAADRASACAACAEAKGCGTRALMSMHRTDLMTIARPAGLIVAPGDEVEVAMSGNNLLAGAGLAYLLPALAFVVALALASGAGLSDGGAALVGGVVLMFSFLPLVLLEAARGCRGRCRCSTCIRGTADDGRRAAFRTGLALAAGLVLAGGVRVLTAPAPDVSETFYVFGTLLEVETHGVPEAQARDAMAVLGAHFRQMHRDWHAWAPGELESLNAAMAAGQSFEVDPGLAKLLQQGRDLACRSEGLFDPAVGGMVEAWGFHADTPPEAIRSDAVVAKLLAGAPKMTDLTITGTTVRSSNPAVQLDLGAYAKGAALDLAEADLTAAGIRDAVLNAGGGVQVLGDHGSRPWRVAIRDPFEWGVVGAVSLRPGEALHTSGNYERYFDRGGIRFSHIIDPRTARPMRGVVSVSVLSDNGALSDAAATALCVAGEEDWPRIAAQMGVRAVLRITDDGSIFATPEMRARLEAVEGGFPAPITVVDLPKDVAIPLCPEG.

3 helical membrane-spanning segments follow: residues 88-108 (LLAGAGLAYLLPALAFVVALA), 118-138 (GGAALVGGVVLMFSFLPLVLL), and 169-189 (GLALAAGLVLAGGVRVLTAPA). Residues 277–279 (LFD) and aspartate 336 contribute to the FAD site. Alanine 339 provides a ligand contact to Mg(2+). FAD contacts are provided by residues lysine 342 and 423–425 (HII). 2 residues coordinate Mg(2+): aspartate 450 and threonine 454.

This sequence in the N-terminal section; belongs to the RseC family. The protein in the C-terminal section; belongs to the ApbE family. Requires Mg(2+) as cofactor.

It is found in the cell membrane. It catalyses the reaction L-threonyl-[protein] + FAD = FMN-L-threonyl-[protein] + AMP + H(+). In terms of biological role, flavin transferase that catalyzes the transfer of the FMN moiety of FAD and its covalent binding to the hydroxyl group of a threonine residue in a target flavoprotein. Is likely involved in the modification of RnfG and RnfD. Required for nitrogen fixation. The sequence is that of FAD:protein FMN transferase from Rhodobacter capsulatus (Rhodopseudomonas capsulata).